We begin with the raw amino-acid sequence, 152 residues long: Small ribosomal subunit protein uS13 (152 aa).

The interval 133–152 (GQHTKTTGRRGRTVGVSKKK) is disordered.

The protein belongs to the universal ribosomal protein uS13 family.

It localises to the cytoplasm. Located at the top of the head of the 40S subunit, it contacts several helices of the 18S rRNA. The sequence is that of Small ribosomal subunit protein uS13 (RpS18) from Spodoptera frugiperda (Fall armyworm).